The chain runs to 311 residues: 4-hydroxy-tetrahydrodipicolinate synthase (311 aa).

Thr-51 serves as a coordination point for pyruvate. Tyr-140 functions as the Proton donor/acceptor in the catalytic mechanism. Lys-168 (schiff-base intermediate with substrate) is an active-site residue. Ile-209 contacts pyruvate.

It belongs to the DapA family. As to quaternary structure, homotetramer; dimer of dimers.

The protein localises to the cytoplasm. It carries out the reaction L-aspartate 4-semialdehyde + pyruvate = (2S,4S)-4-hydroxy-2,3,4,5-tetrahydrodipicolinate + H2O + H(+). It participates in amino-acid biosynthesis; L-lysine biosynthesis via DAP pathway; (S)-tetrahydrodipicolinate from L-aspartate: step 3/4. Functionally, catalyzes the condensation of (S)-aspartate-beta-semialdehyde [(S)-ASA] and pyruvate to 4-hydroxy-tetrahydrodipicolinate (HTPA). The chain is 4-hydroxy-tetrahydrodipicolinate synthase from Streptococcus pneumoniae (strain ATCC 700669 / Spain 23F-1).